The chain runs to 276 residues: N-alpha-acetyltransferase 60 (276 aa).

An N-acetyltransferase domain is found at 34–239; sequence VQLRFLVPDD…WTLLDHIKHY (206 aa). Tyr59 is a binding site for substrate. Residue Tyr139 is part of the active site. Leu141 is a binding site for substrate. Acetyl-CoA is bound by residues 143-145 and 151-156; these read LGV and RNGIGS. The active site involves His180. Acetyl-CoA contacts are provided by residues Asn185 and 192–195; that span reads YEKR. A required for homodimerization region spans residues 204–215; the sequence is PYYYNIRGKGKD. Tyr207 lines the substrate pocket.

The protein belongs to the acetyltransferase family. NAA60 subfamily.

It carries out the reaction N-terminal L-methionyl-[transmembrane protein] + acetyl-CoA = N-terminal N(alpha)-acetyl-L-methionyl-[transmembrane protein] + CoA + H(+). The catalysed reaction is L-lysyl-[protein] + acetyl-CoA = N(6)-acetyl-L-lysyl-[protein] + CoA + H(+). Its function is as follows. Displays alpha (N-terminal) acetyltransferase activity towards a range of N-terminal sequences including those starting with Met-Lys, Met-Val, Met-Ala and Met-Met. Required for normal chromosomal segregation during anaphase. In terms of biological role, shows histone acetyltransferase activity toward free histones. Does not show histone acetyltransferase activity toward free histones. This is N-alpha-acetyltransferase 60 from Drosophila melanogaster (Fruit fly).